The primary structure comprises 651 residues: Probable potassium transport system protein Kup (651 aa).

12 helical membrane-spanning segments follow: residues 41-61 (LVLG…IYAF), 82-102 (VVSL…VLFV), 130-150 (LILG…VITP), 163-183 (IVAP…LVTL), 194-214 (VAIV…ASGL), 235-255 (FLTV…LAMT), 276-296 (WLWI…AFIL), 309-329 (MIPS…TVIA), 366-386 (IYIP…VLGF), 395-415 (AYGI…YIVM), 426-446 (ALPI…ANII), and 450-470 (EGGW…WTWV).

The protein belongs to the HAK/KUP transporter (TC 2.A.72) family.

It localises to the cell inner membrane. The enzyme catalyses K(+)(in) + H(+)(in) = K(+)(out) + H(+)(out). In terms of biological role, transport of potassium into the cell. Likely operates as a K(+):H(+) symporter. This Brucella melitensis biotype 1 (strain ATCC 23456 / CCUG 17765 / NCTC 10094 / 16M) protein is Probable potassium transport system protein Kup.